The following is a 467-amino-acid chain: Ankyrin repeat and SOCS box protein 10 (467 aa).

ANK repeat units follow at residues 115–144 (ELTT…RPDS), 147–176 (GGRT…DPNI), 180–209 (DGKR…RVDG), 214–243 (EEET…CPDA), 247–289 (EGWT…DADA), 293–322 (DKQR…SANT), and 326–361 (GGHT…AVRV). Residues 412–464 (YSSLFALVRQPRSLQHLSRCALRSHLEGSLPQALPRLPLPPRLLRYLQLDFEG) enclose the SOCS box domain.

Belongs to the ankyrin SOCS box (ASB) family. In terms of tissue distribution, expressed in the eye. The highest expression is observed in the iris, with moderate levels in the trabecular meshwork (TM), the lamina, and the optic nerve; slightly lower levels in the ciliary body, retina, and choroid; and very low levels in the lens.

It is found in the cytoplasm. The protein localises to the nucleus. It functions in the pathway protein modification; protein ubiquitination. May be a substrate-recognition component of a SCF-like ECS (Elongin-Cullin-SOCS-box protein) E3 ubiquitin-protein ligase complex which mediates the ubiquitination and subsequent proteasomal degradation of target proteins. The protein is Ankyrin repeat and SOCS box protein 10 (ASB10) of Homo sapiens (Human).